The primary structure comprises 208 residues: ATP phosphoribosyltransferase (208 aa).

Belongs to the ATP phosphoribosyltransferase family. Short subfamily. As to quaternary structure, heteromultimer composed of HisG and HisZ subunits.

It is found in the cytoplasm. The enzyme catalyses 1-(5-phospho-beta-D-ribosyl)-ATP + diphosphate = 5-phospho-alpha-D-ribose 1-diphosphate + ATP. It participates in amino-acid biosynthesis; L-histidine biosynthesis; L-histidine from 5-phospho-alpha-D-ribose 1-diphosphate: step 1/9. Its function is as follows. Catalyzes the condensation of ATP and 5-phosphoribose 1-diphosphate to form N'-(5'-phosphoribosyl)-ATP (PR-ATP). Has a crucial role in the pathway because the rate of histidine biosynthesis seems to be controlled primarily by regulation of HisG enzymatic activity. In Clostridioides difficile (strain 630) (Peptoclostridium difficile), this protein is ATP phosphoribosyltransferase.